The chain runs to 1634 residues: MGMSMGKIKIDALIDNTYKTIEDKAVIYLYLINSILKDRDFKPYFYVELHKEKVENEDIEKIKEFLLKNDLLKFVENIEVVKKIILRKEKEVIKIIATHPQKVPKLRKIKECEIVKEIYEHDIPFAKRYLIDNEIIPMTYWDFENKKPVSIEIPKLKSVAFDMEVYNRDTEPNPERDPILMASFWDENGGKVITYKEFNHPNIEVVKNEKELIKKIIETLKEYDVIYTYNGDNFDFPYLKARAKIYGIDINLGKDGEELKIKRGGMEYRSYIPGRVHIDLYPISRRLLKLTKYTLEDVVYNLFGIEKLKIPHTKIVDYWANNDKTLIEYSLQDAKYTYKIGKYFFPLEVMFSRIVNQTPFEITRMSSGQMVEYLLMKRAFKENMIVPNKPDEEEYRRRVLTTYEGGYVKEPEKGMFEDIISMDFRCHPKGTKVVVKGKGIVNIEDVKEGNYVLGIDGWQKVKKVWKYEYEGELINVNGLKCTPNHKIPLRYKIKHKKINKNDYLVRDIYAKSLLTKFKGEGKLILCKDFETIGNYEKYINDMDEDFILKSELIGILLAEGHLLRRDIEYFDSSRGKKRISHQYRVEITVNEDEKDFIEKIKYIFKKLFNYELYVRRKKGTKAITLGCAKKDIYLKIEEILKNKEKYLPNAILRGFFEGDGYVNTVRRAVVVNQGTNNYDKIKFIASLLDRLGIKYSFYTYSYEERGKKLKRYVIEIFSKGDLIKFSILISFISRRKNNLLNEIIRQKTLYKIGDYGFYDLDDVCVSLESYKGEVYDLTLEGRPYYFANGILTHNSLYPSIIISYNISPDTLDCECCKDVSEKILGHWFCKKKEGLIPKTLRNLIERRINIKRRMKKMAEIGEINEEYNLLDYEQKSLKILANSILPDEYLTIIEEDGIKVVKIGEYIDDLMRKHKDKIKFSGISEILETKNLKTFSFDKITKKCEIKKVKALIRHPYFGKAYKIKLRSGRTIKVTRGHSLFKYENGKIVEVKGDDVRFGDLIVVPKKLTCVDKEVVINIPKRLINADEEEIKDLVITKHKDKAFFVKLKKTLEDIENNKLKVIFDDCILYLKELGLIDYNIIKKINKVDIKILDEEKFKAYKKYFDTVIEHGNFKKGRCNIQYIKIKDYIANIPDKEFEDCEIGAYSGKINALLKLDEKLAKFLGFFVTRGRLKKQKLKGETVYEISVYKSLPEYQKEIAETFKEVFGAGSMVKDKVTMDNKIVYLVLKYIFKCGDKDKKHIPEELFLASESVIKSFLDGFLKAKKNSHKGTSTFMAKDEKYLNQLMILFNLVGIPTRFTPVKNKGYKLTLNPKYGTVKDLMLDEVKEIEAFEYSGYVYDLSVEDNENFLVNNIYAHNSVYGYLAFPRARFYSRECAEIVTYLGRKYILETVKEAEKFGFKVLYIDTDGFYAIWKEKISKEELIKKAMEFVEYINSKLPGTMELEFEGYFKRGIFVTKKRYALIDENGRVTVKGLEFVRRDWSNIAKITQRRVLEALLVEGSIEKAKKIIQDVIKDLREKKIKKEDLIIYTQLTKDPKEYKTTAPHVEIAKKLMREGKRIKVGDIIGYIIVKGTKSISERAKLPEEVDIDDIDVNYYIDNQILPPVLRIMEAVGVSKNELKKEGAQLTLDKFFK.

DOD-type homing endonuclease domains lie at 552–693 and 1163–1295; these read LIGI…RLGI and FLGF…LVGI.

This sequence belongs to the DNA polymerase type-B family. In terms of processing, this protein undergoes a protein self splicing that involves a post-translational excision of the intervening region (intein) followed by peptide ligation.

The enzyme catalyses DNA(n) + a 2'-deoxyribonucleoside 5'-triphosphate = DNA(n+1) + diphosphate. The polypeptide is DNA polymerase (pol) (Methanocaldococcus jannaschii (strain ATCC 43067 / DSM 2661 / JAL-1 / JCM 10045 / NBRC 100440) (Methanococcus jannaschii)).